Here is a 104-residue protein sequence, read N- to C-terminus: Large ribosomal subunit protein bL21 (104 aa).

It belongs to the bacterial ribosomal protein bL21 family. Part of the 50S ribosomal subunit. Contacts protein L20.

This protein binds to 23S rRNA in the presence of protein L20. In Thermodesulfovibrio yellowstonii (strain ATCC 51303 / DSM 11347 / YP87), this protein is Large ribosomal subunit protein bL21.